We begin with the raw amino-acid sequence, 282 residues long: Phosphatidylglycerol--prolipoprotein diacylglyceryl transferase (282 aa).

3 consecutive transmembrane segments (helical) span residues 18-38 (LSIK…YFIA), 55-75 (VIFY…VIFQ), and 89-109 (IWHG…TGII). An a 1,2-diacyl-sn-glycero-3-phospho-(1'-sn-glycerol)-binding site is contributed by arginine 137. The next 2 helical transmembrane spans lie at 203–223 (VGET…FVEG) and 235–255 (IRVA…ILIY).

This sequence belongs to the Lgt family.

The protein resides in the cell membrane. The enzyme catalyses L-cysteinyl-[prolipoprotein] + a 1,2-diacyl-sn-glycero-3-phospho-(1'-sn-glycerol) = an S-1,2-diacyl-sn-glyceryl-L-cysteinyl-[prolipoprotein] + sn-glycerol 1-phosphate + H(+). Its pathway is protein modification; lipoprotein biosynthesis (diacylglyceryl transfer). In terms of biological role, catalyzes the transfer of the diacylglyceryl group from phosphatidylglycerol to the sulfhydryl group of the N-terminal cysteine of a prolipoprotein, the first step in the formation of mature lipoproteins. The sequence is that of Phosphatidylglycerol--prolipoprotein diacylglyceryl transferase from Staphylococcus haemolyticus (strain JCSC1435).